Reading from the N-terminus, the 362-residue chain is DNA replication and repair protein RecF (362 aa).

30–37 (GDNAQGKT) contributes to the ATP binding site.

Belongs to the RecF family.

Its subcellular location is the cytoplasm. The RecF protein is involved in DNA metabolism; it is required for DNA replication and normal SOS inducibility. RecF binds preferentially to single-stranded, linear DNA. It also seems to bind ATP. The polypeptide is DNA replication and repair protein RecF (Agathobacter rectalis (strain ATCC 33656 / DSM 3377 / JCM 17463 / KCTC 5835 / VPI 0990) (Eubacterium rectale)).